The primary structure comprises 601 residues: Peptide transporter PTR2 (601 aa).

The segment covering 1-10 has biased composition (polar residues); sequence MLNHPSQGSD. Residues 1–66 are disordered; sequence MLNHPSQGSD…DEDFEGPTEE (66 aa). Residues 1–150 lie on the Extracellular side of the membrane; that stretch reads MLNHPSQGSD…PVFGGYVADT (150 aa). The span at 14–28 shows a compositional bias: basic and acidic residues; sequence DEKQGDFPVIEEEKT. Phosphotyrosine is present on Tyr-37. Residues Ser-39 and Ser-45 each carry the phosphoserine modification. Polar residues predominate over residues 42-53; it reads VANSTERYNLSP. The segment covering 55 to 66 has biased composition (acidic residues); the sequence is PEDEDFEGPTEE. A helical membrane pass occupies residues 151–172; it reads FWGKYNTICCGTAIYIAGIFIL. Residues 173–182 are Cytoplasmic-facing; sequence FITSIPSVGN. Residues 183–202 form a helical membrane-spanning segment; the sequence is RDSAIGGFIAAIILIGIATG. Residues 203 to 210 lie on the Extracellular side of the membrane; the sequence is MIKANLSV. The chain crosses the membrane as a helical span at residues 211–229; sequence LIADQLPKRKPSIKVLKSG. Topologically, residues 230 to 267 are cytoplasmic; that stretch reads ERVIVDSNITLQNVFMFFYFMINVGSLSLMATTELEYH. Residues 268-287 form a helical membrane-spanning segment; that stretch reads KGFWAAYLLPFCFFWIAVVT. At 288 to 294 the chain is on the extracellular side; the sequence is LIFGKKQ. A helical membrane pass occupies residues 295–316; it reads YIQRPIGDKVIAKSFKVCWILT. Residues 317-378 are Cytoplasmic-facing; that stretch reads KNKFDFNAAK…ISSFITQASM (62 aa). The chain crosses the membrane as a helical span at residues 379-399; that stretch reads MELHGIPNDFLQAFDSIALII. The Extracellular segment spans residues 400 to 412; it reads FIPIFEKFVYPFI. The chain crosses the membrane as a helical span at residues 413-429; it reads RRYTPLKPITKIFFGFM. Topologically, residues 430–448 are cytoplasmic; it reads FGSFAMTWAAVLQSFVYKA. Residues 449–466 form a helical membrane-spanning segment; sequence GPWYNEPLGHNTPNHVHV. Residues 467–494 are Extracellular-facing; the sequence is CWQIPAYVLISFSEIFASITGLEYAYSK. A helical transmembrane segment spans residues 495 to 513; the sequence is APASMKSFIMSIFLLTNAF. At 514–526 the chain is on the cytoplasmic side; it reads GSAIGCALSPVTV. The helical transmembrane segment at 527–547 threads the bilayer; the sequence is DPKFTWLFTGLAVACFISGCL. The Extracellular segment spans residues 548 to 554; it reads FWLCFRK. The chain crosses the membrane as a helical span at residues 555-577; the sequence is YNDTEEEMNAMDYEEEDEFDLNP. Over 578-601 the chain is Cytoplasmic; the sequence is ISAPKANDIEILEPMESLRSTTKY. Residue Ser-594 is modified to Phosphoserine.

This sequence belongs to the major facilitator superfamily. Proton-dependent oligopeptide transporter (POT/PTR) (TC 2.A.17) family.

Its subcellular location is the membrane. Uptake of small peptides. In Saccharomyces cerevisiae (strain ATCC 204508 / S288c) (Baker's yeast), this protein is Peptide transporter PTR2 (PTR2).